A 146-amino-acid chain; its full sequence is MLSPKKTKYRKQFKGRIHGTSKGGTLLNFGSYGLKAVEPERITARQIEAARRAITRQMKRQGRVWIRIFPDVPVTGKPAEVRMGKGKGAVDHWAARVAPGRIMFEIDGVPDDIAREALRLGAAKLPIRTRVVTRIDAGAALEAEAA.

It belongs to the universal ribosomal protein uL16 family. Part of the 50S ribosomal subunit.

Binds 23S rRNA and is also seen to make contacts with the A and possibly P site tRNAs. This Caulobacter sp. (strain K31) protein is Large ribosomal subunit protein uL16.